Consider the following 281-residue polypeptide: Putative pyruvate, phosphate dikinase regulatory protein (281 aa).

Gly-150–Thr-157 lines the ADP pocket.

It belongs to the pyruvate, phosphate/water dikinase regulatory protein family. PDRP subfamily.

The enzyme catalyses N(tele)-phospho-L-histidyl/L-threonyl-[pyruvate, phosphate dikinase] + ADP = N(tele)-phospho-L-histidyl/O-phospho-L-threonyl-[pyruvate, phosphate dikinase] + AMP + H(+). It catalyses the reaction N(tele)-phospho-L-histidyl/O-phospho-L-threonyl-[pyruvate, phosphate dikinase] + phosphate + H(+) = N(tele)-phospho-L-histidyl/L-threonyl-[pyruvate, phosphate dikinase] + diphosphate. In terms of biological role, bifunctional serine/threonine kinase and phosphorylase involved in the regulation of the pyruvate, phosphate dikinase (PPDK) by catalyzing its phosphorylation/dephosphorylation. This chain is Putative pyruvate, phosphate dikinase regulatory protein, found in Sorangium cellulosum (strain So ce56) (Polyangium cellulosum (strain So ce56)).